A 51-amino-acid chain; its full sequence is UPF0391 membrane protein PsycPRwf_2202 (51 aa).

Helical transmembrane passes span 6–26 (IIFA…VAGL) and 27–47 (SQNF…IGFI).

This sequence belongs to the UPF0391 family.

The protein localises to the cell membrane. The chain is UPF0391 membrane protein PsycPRwf_2202 from Psychrobacter sp. (strain PRwf-1).